The sequence spans 186 residues: Ribosome-recycling factor (186 aa).

This sequence belongs to the RRF family.

The protein resides in the cytoplasm. In terms of biological role, responsible for the release of ribosomes from messenger RNA at the termination of protein biosynthesis. May increase the efficiency of translation by recycling ribosomes from one round of translation to another. The polypeptide is Ribosome-recycling factor (Beijerinckia indica subsp. indica (strain ATCC 9039 / DSM 1715 / NCIMB 8712)).